A 411-amino-acid polypeptide reads, in one-letter code: Probable glutamate dehydrogenase 3 (411 aa).

K102 is a catalytic residue.

Belongs to the Glu/Leu/Phe/Val dehydrogenases family.

The catalysed reaction is L-glutamate + NAD(+) + H2O = 2-oxoglutarate + NH4(+) + NADH + H(+). It catalyses the reaction L-glutamate + NADP(+) + H2O = 2-oxoglutarate + NH4(+) + NADPH + H(+). This Arabidopsis thaliana (Mouse-ear cress) protein is Probable glutamate dehydrogenase 3 (GSH3).